Consider the following 504-residue polypeptide: Maturase K (504 aa).

It belongs to the intron maturase 2 family. MatK subfamily.

It localises to the plastid. The protein localises to the chloroplast. Functionally, usually encoded in the trnK tRNA gene intron. Probably assists in splicing its own and other chloroplast group II introns. The sequence is that of Maturase K from Actinidia chinensis (Kiwi).